Here is a 250-residue protein sequence, read N- to C-terminus: Tetrahydromethanopterin S-methyltransferase subunit D (250 aa).

The next 6 membrane-spanning stretches (helical) occupy residues 9–29 (IIWM…VHFV), 47–67 (GTVQ…GFMM), 86–106 (IMIA…VGVV), 144–164 (IIGG…LIEV), 184–204 (LVAV…VIPS), and 230–250 (LVAS…LGGI).

Belongs to the MtrD family. The complex is composed of 8 subunits; MtrA, MtrB, MtrC, MtrD, MtrE, MtrF, MtrG and MtrH.

Its subcellular location is the cell membrane. The enzyme catalyses 5-methyl-5,6,7,8-tetrahydromethanopterin + coenzyme M + 2 Na(+)(in) = 5,6,7,8-tetrahydromethanopterin + methyl-coenzyme M + 2 Na(+)(out). The protein operates within one-carbon metabolism; methanogenesis from CO(2); methyl-coenzyme M from 5,10-methylene-5,6,7,8-tetrahydromethanopterin: step 2/2. Its function is as follows. Part of a complex that catalyzes the formation of methyl-coenzyme M and tetrahydromethanopterin from coenzyme M and methyl-tetrahydromethanopterin. This is an energy-conserving, sodium-ion translocating step. This Methanosarcina barkeri (strain Fusaro / DSM 804) protein is Tetrahydromethanopterin S-methyltransferase subunit D.